A 345-amino-acid polypeptide reads, in one-letter code: N-acetyl-gamma-glutamyl-phosphate reductase (345 aa).

C149 is a catalytic residue.

This sequence belongs to the NAGSA dehydrogenase family. Type 1 subfamily.

The protein resides in the cytoplasm. The enzyme catalyses N-acetyl-L-glutamate 5-semialdehyde + phosphate + NADP(+) = N-acetyl-L-glutamyl 5-phosphate + NADPH + H(+). The protein operates within amino-acid biosynthesis; L-arginine biosynthesis; N(2)-acetyl-L-ornithine from L-glutamate: step 3/4. Catalyzes the NADPH-dependent reduction of N-acetyl-5-glutamyl phosphate to yield N-acetyl-L-glutamate 5-semialdehyde. This Bacillus cereus (strain 03BB102) protein is N-acetyl-gamma-glutamyl-phosphate reductase.